The sequence spans 907 residues: Lateral signaling target protein 2 homolog (907 aa).

Disordered regions lie at residues 339 to 395, 463 to 604, 662 to 688, 716 to 756, and 770 to 834; these read SSDN…DPAN, LTDS…SGDA, NSSP…PDPA, EVNA…SENG, and GSGG…EERR. Polar residues predominate over residues 351–361; sequence DISSFYTSNNR. Residues 367 to 393 are compositionally biased toward acidic residues; it reads EPNEDDDVSESNDEDEDEGEEVDEDDP. 2 stretches are compositionally biased toward polar residues: residues 463-475 and 486-495; these read LTDS…NPSL and PVTSSHPIAQ. Acidic residues predominate over residues 501 to 516; that stretch reads SEEEGEVDEYDEDDSE. A compositionally biased stretch (basic residues) spans 525–549; that stretch reads HHTKHQRRHRHHHHHHRKHYSKHRS. Residues 550-565 show a composition bias toward low complexity; that stretch reads SAAGSAGTSGTTCSAA. Polar residues predominate over residues 568–580; the sequence is QISSCDTSPSSGG. A compositionally biased stretch (gly residues) spans 592 to 602; it reads GSSGNSSGGSG. Residues 742–751 show a composition bias toward polar residues; it reads APRTMMTTAA. A compositionally biased stretch (low complexity) spans 777–793; the sequence is GSSRSSQERSVSLSETS. Residues 816 to 826 show a composition bias toward polar residues; it reads PKSVQSEQSGQ. Residues 845-905 form an FYVE-type zinc finger; the sequence is DGDAPRCMAC…VCRECFVREV (61 aa). Zn(2+) is bound by residues cysteine 851, cysteine 854, cysteine 867, cysteine 870, cysteine 875, cysteine 878, cysteine 897, and cysteine 900.

It belongs to the lst-2 family.

Negative regulator of epidermal growth factor receptor (EGFR) signaling. The protein is Lateral signaling target protein 2 homolog of Culex quinquefasciatus (Southern house mosquito).